The chain runs to 187 residues: Elongation factor P (187 aa).

Belongs to the elongation factor P family.

The protein localises to the cytoplasm. It functions in the pathway protein biosynthesis; polypeptide chain elongation. In terms of biological role, involved in peptide bond synthesis. Stimulates efficient translation and peptide-bond synthesis on native or reconstituted 70S ribosomes in vitro. Probably functions indirectly by altering the affinity of the ribosome for aminoacyl-tRNA, thus increasing their reactivity as acceptors for peptidyl transferase. In Granulibacter bethesdensis (strain ATCC BAA-1260 / CGDNIH1), this protein is Elongation factor P.